The following is a 194-amino-acid chain: Chromophore lyase CpcT/CpeT 1 (194 aa).

The protein belongs to the CpcT/CpeT biliprotein lyase family.

Functionally, covalently attaches a chromophore to Cys residue(s) of phycobiliproteins. In Microcystis aeruginosa (strain NIES-843 / IAM M-2473), this protein is Chromophore lyase CpcT/CpeT 1.